A 132-amino-acid polypeptide reads, in one-letter code: Small ribosomal subunit protein uS8c (132 aa).

It belongs to the universal ribosomal protein uS8 family. In terms of assembly, part of the 30S ribosomal subunit.

The protein resides in the plastid. Its subcellular location is the chloroplast. One of the primary rRNA binding proteins, it binds directly to 16S rRNA central domain where it helps coordinate assembly of the platform of the 30S subunit. This chain is Small ribosomal subunit protein uS8c (rps8), found in Guillardia theta (Cryptophyte).